The sequence spans 687 residues: Chloride channel protein ClC-Ka (687 aa).

A run of 4 helical transmembrane segments spans residues 52 to 72 (FLMT…FAIG), 161 to 181 (LFLG…AYLG), 202 to 222 (VAAA…GVLF), and 236 to 256 (YWRG…LAVF). The Ca(2+) site is built by E259, E261, D278, and E281. 6 helical membrane passes run 282–302 (IFFF…YLFC), 329–349 (ALAT…HFLA), 396–416 (FTIF…LILA), 417–437 (TTIP…AAIG), 452–472 (IVTG…AGAA), and 486–506 (LLAF…MAVL). The Cytoplasmic segment spans residues 507–687 (AANAIAQSCQ…SNLTNPPAPK (181 aa)). CBS domains follow at residues 551–609 (MNHS…EPPS) and 626–684 (CPTE…TNPP).

It belongs to the chloride channel (TC 2.A.49) family. CLCNKA subfamily. Homodimer. Interacts with BSND.

It localises to the basolateral cell membrane. It carries out the reaction chloride(in) = chloride(out). It catalyses the reaction bromide(in) = bromide(out). The enzyme catalyses nitrate(in) = nitrate(out). The catalysed reaction is iodide(out) = iodide(in). Its activity is regulated as follows. Activated by extracellular Ca(2+) and inhibited by extracellular acidic pH. Anion-selective channel permeable to small monovalent anions with ion selectivity for chloride &gt; bromide &gt; nitrate &gt; iodide. Forms a homodimeric channel where each subunit has its own ion conduction pathway. May conduct double-barreled currents controlled by two types of gates, two fast gates that control each subunit independently and a slow common gate that opens and shuts off both subunits simultaneously. Assembles with the regulatory subunit BSND/Barttin for sorting at the basolateral plasma membrane domain and functional switch to the ion conducting state. CLCNKA:BSND channels display mostly a linear current-voltage relationship with fast gating at negative potentials. Mediates transepithelial chloride transport from the lumen to interstitial compartment along the thin ascending limb of Henle's loop, contributing to generation of hypertonic medullary interstitium as a countercurrent system to achieve urine concentration. Conducts chloride currents in the stria vascularis of the inner ear to establish the endocochlear potential necessary for normal hearing. This is Chloride channel protein ClC-Ka from Homo sapiens (Human).